An 892-amino-acid polypeptide reads, in one-letter code: MFRKLGSSGSLWKPKNPHSLEYLKYLQGVLTKNEKVTENNKKILVEALRAIAEILIWGDQNDASVFDFFLERQMLLYFLKIMEQGNTPLNVQLLQTLNILFENIRHETSLYFLLSNNHVNSIISHKFDLQNDEIMAYYISFLKTLSFKLNPATIHFFFNETTEEFPLLVEVLKLYNWNESMVRIAVRNILLNIVRVQDDSMIIFAIKHTKEYLSELIDSLVGLSLEMDTFVRSAENVLANRERLRGKVDDLIDLIHYIGELLDVEAVAESLSILVTTRYLSPLLLSSISPRRDNHSLLLTPISALFFFSEFLLIVRHHETIYTFLSSFLFDTQNTLTTHWIRHNEKYCLEPITLSSPTGEYVNEDHVFFDFLLEAFDSSQADDSKAFYGLMLIYSMFQNNADVGELLSAANFPVLKESTTTSLAQQNLARLRIASTSSISKRTRAITEIGVEATEEDEIFHDVPEEQTLEDLVDDVLVDTENSAISDPEPKNVESESRSRFQSAVDELPPPSTSGCDGRLFDALSSIIKAVGTDDNRIRPITLELACLVIRQILMTVDDEKVHTSLTKLCFEVRLKLLSSIGQYVNGENLFLEWFEDEYAEFEVNHVNFDIIGHEMLLPPAATPLSNLLLHKRLPSGFEERIRTQIVFYLHIRKLERDLTGEGDTELPVRVLNSDQEPVAIGDCINLHNSDLLSCTVVPQQLCSLGKPGDRLARFLVTDRLQLILVEPDSRKAGWAIVRFVGLLQDTTINGDSTDSKVLHVVVEGQPSRIKKRHPVLTAKFIFDDHIRCMAAKQRLTKGRQTARGLKLQAICSALGVPRIDPATMTSSPRMNPFRIVKGCAPGSVRKTVSTSSSSSQGRPGHYSANLRSASRNAGMIPDDPTQPSSSSERRS.

The FPL domain occupies 48–194 (LRAIAEILIW…AVRNILLNIV (147 aa)). A compositionally biased stretch (low complexity) spans 844–856 (SVRKTVSTSSSSS). The interval 844 to 892 (SVRKTVSTSSSSSQGRPGHYSANLRSASRNAGMIPDDPTQPSSSSERRS) is disordered. A compositionally biased stretch (polar residues) spans 882 to 892 (TQPSSSSERRS).

The protein belongs to the CLEC16A/gop-1 family.

Regulator of mitophagy. The protein is Protein CLEC16A homolog (gop-1) of Caenorhabditis elegans.